The primary structure comprises 85 residues: Cytochrome b (85 aa).

3 helical membrane passes run 1-8 (LTGLFLAM), 32-53 (WLIR…YLHI), and 68-85 (WNVG…AFVG). Heme b is bound by residues His38 and His52.

This sequence belongs to the cytochrome b family. As to quaternary structure, the cytochrome bc1 complex contains 3 respiratory subunits (MT-CYB, CYC1 and UQCRFS1), 2 core proteins (UQCRC1 and UQCRC2) and probably 6 low-molecular weight proteins. Requires heme b as cofactor.

The protein localises to the mitochondrion inner membrane. Component of the ubiquinol-cytochrome c reductase complex (complex III or cytochrome b-c1 complex) that is part of the mitochondrial respiratory chain. The b-c1 complex mediates electron transfer from ubiquinol to cytochrome c. Contributes to the generation of a proton gradient across the mitochondrial membrane that is then used for ATP synthesis. The polypeptide is Cytochrome b (mt-cyb) (Pomoxis nigromaculatus (Black crappie)).